Reading from the N-terminus, the 487-residue chain is Histamine H1 receptor (487 aa).

At Met-1 to Pro-29 the chain is on the extracellular side. N-linked (GlcNAc...) asparagine glycans are attached at residues Asn-5 and Asn-18. Residues Leu-30 to Tyr-50 form a helical membrane-spanning segment. At Ala-51–Leu-64 the chain is on the cytoplasmic side. Residues Tyr-65 to Leu-89 traverse the membrane as a helical segment. Residues Met-90–Arg-97 lie on the Extracellular side of the membrane. The helical transmembrane segment at Pro-98–Ile-123 threads the bilayer. Residues Cys-100 and Cys-180 are joined by a disulfide bond. Histamine-binding residues include Asp-107 and Thr-112. The important for agonist binding stretch occupies residues Asp-107 to Thr-112. At Asp-124–Ala-144 the chain is on the cytoplasmic side. Phosphothreonine is present on residues Thr-140 and Thr-142. Residues Ser-145–Gly-164 traverse the membrane as a helical segment. Topologically, residues Trp-165 to Thr-188 are extracellular. Residues Trp-189–Ala-211 form a helical membrane-spanning segment. Histamine is bound at residue Asn-198. Over Lys-212–Gln-416 the chain is Cytoplasmic. Ser-230 carries the phosphoserine modification. Over residues Lys-238–Lys-261 the composition is skewed to basic and acidic residues. A disordered region spans residues Lys-238 to Gln-291. A Phosphothreonine modification is found at Thr-279. Phosphoserine occurs at positions 344 and 347. Residues Glu-345 to Gly-379 are disordered. Residues Gly-353–Thr-369 are compositionally biased toward polar residues. Phosphoserine is present on residues Ser-380, Ser-396, and Ser-398. A helical transmembrane segment spans residues Leu-417–Phe-440. The segment at Phe-424–Trp-428 is important for agonist binding. Tyr-431 provides a ligand contact to histamine. Cys-441 and Cys-444 are disulfide-bonded. Topologically, residues Cys-441–Asn-446 are extracellular. A helical transmembrane segment spans residues Glu-447–Pro-469. The Cytoplasmic segment spans residues Leu-470–Ser-487.

It belongs to the G-protein coupled receptor 1 family. In terms of processing, phosphorylation at sites in the second and third cytoplasmic loops independently contribute to agonist-induced receptor down-regulation.

It is found in the cell membrane. G-protein-coupled receptor for histamine, a biogenic amine that functions as an immune modulator and a neurotransmitter. Through the H1 receptor, histamine mediates the contraction of smooth muscles and increases capillary permeability due to contraction of terminal venules. Also mediates neurotransmission in the central nervous system and thereby regulates circadian rhythms, emotional and locomotor activities as well as cognitive functions. The chain is Histamine H1 receptor from Homo sapiens (Human).